The primary structure comprises 101 residues: Small ribosomal subunit protein bS18c (101 aa).

It belongs to the bacterial ribosomal protein bS18 family. In terms of assembly, part of the 30S ribosomal subunit.

It is found in the plastid. The protein resides in the chloroplast. This Nymphaea alba (White water-lily) protein is Small ribosomal subunit protein bS18c.